A 432-amino-acid polypeptide reads, in one-letter code: Keratin, type I cytoskeletal 18-B (432 aa).

Positions 1–21 (MSYSRSMYSSSSVVGGSPYRS) are enriched in low complexity. The segment at 1-44 (MSYSRSMYSSSSVVGGSPYRSLSSAPRFAPGSSAASVHAGPGGS) is disordered. Residues 2-82 (SYSRSMYSSS…NVSLMGGAQN (81 aa)) are head. The segment at 83-118 (EKETMQDLNDRLASYLERVRSLETANKELEVQIRQH) is coil 1A. The IF rod domain occupies 83 to 393 (EKETMQDLND…RLLEGDSFDL (311 aa)). The tract at residues 119-134 (TEKKGPAKDWSPYYKA) is linker 1. A coil 1B region spans residues 135–226 (IEDLKKQVFD…KNHQDDVNEL (92 aa)). The linker 12 stretch occupies residues 227 to 250 (QAQIARSAVTVEVDAPKSQDLGKI). A coil 2 region spans residues 251–388 (MAELRAQYDG…IHTYRRLLEG (138 aa)). The tail stretch occupies residues 389 to 432 (DSFDLQDAVPTVTTQTVKKVITTTQRIVDGKVVAESNDTEVLKA).

Belongs to the intermediate filament family. Heterotetramer of two type I and two type II keratins. Keratin-18 associates with keratin-8. Phosphorylated. Post-translationally, proteolytically cleaved by caspases during epithelial cell apoptosis.

Functionally, when phosphorylated, plays a role in filament reorganization. The chain is Keratin, type I cytoskeletal 18-B (krt18-b) from Xenopus laevis (African clawed frog).